Consider the following 215-residue polypeptide: Urease accessory protein UreG (215 aa).

GTP is bound at residue 24–31 (GPVGSGKT).

Belongs to the SIMIBI class G3E GTPase family. UreG subfamily. Homodimer. UreD, UreF and UreG form a complex that acts as a GTP-hydrolysis-dependent molecular chaperone, activating the urease apoprotein by helping to assemble the nickel containing metallocenter of UreC. The UreE protein probably delivers the nickel.

It is found in the cytoplasm. Functionally, facilitates the functional incorporation of the urease nickel metallocenter. This process requires GTP hydrolysis, probably effectuated by UreG. The protein is Urease accessory protein UreG of Burkholderia ambifaria (strain MC40-6).